The chain runs to 700 residues: MARKTPIERYRNIGISAHIDAGKTTTTERILFYTGVNHKLGETHDGSATMDWMEQEQERGITITSAATTAFWRGMAGNYPEHRINIIDTPGHVDFTIEVERSMRVLDGACMVYCAVGGVQPQSETVWRQANKYGVPRLAFVNKMDRTGANFFKVYDQLKTRLRANPVPIVIPIGAEDSFTGVVDLVKMKAIIWDEASQGTKFEYGDIPAELEGTANEWREKLVEAAAESSEELMNKYLETGSLDEDDINVALRQRTIAGEIQPMLCGTAFKNKGVQRMLDAVIDYLPSPADIPPVDGQDDDGNPIKRSADDAEKFSALAFKLMSDPFVGQLTFVRVYSGVLKSGDTVYNPIKGKKERIGRLLQMHANNREEIKEVLAGDIAAVVGLKDVTTGETLCDIDSHILLERMEFPEPVISQAVEPKSKADQEKMGLALSRLAQEDPSFRVRSDEESGQTIISGMGELHLEILVDRMRREFGVEANVGKPQVAYRETIRKNCDEVEGKFVKQSGGRGQYGHVVLKLEPLPPGGGYEFVDAIKGGVVPREYIPAVDKGIQETLPAGILAGYPVVDVKATLFFGSYHDVDSNENAFKMAASMAFKEGMRRASPVLLEPMMAVEVETPEDYAGTVMGDLSSRRGMVQGMDDIVGGGKTIKAEVPLAEMFGYATNLRSLTQGRATYTMEFKHYAEAPKNVADEVIAARGK.

Residues 8–290 (ERYRNIGISA…AVIDYLPSPA (283 aa)) form the tr-type G domain. GTP is bound by residues 17–24 (AHIDAGKT), 88–92 (DTPGH), and 142–145 (NKMD).

It belongs to the TRAFAC class translation factor GTPase superfamily. Classic translation factor GTPase family. EF-G/EF-2 subfamily.

It is found in the cytoplasm. Catalyzes the GTP-dependent ribosomal translocation step during translation elongation. During this step, the ribosome changes from the pre-translocational (PRE) to the post-translocational (POST) state as the newly formed A-site-bound peptidyl-tRNA and P-site-bound deacylated tRNA move to the P and E sites, respectively. Catalyzes the coordinated movement of the two tRNA molecules, the mRNA and conformational changes in the ribosome. This chain is Elongation factor G 1, found in Bordetella bronchiseptica (strain ATCC BAA-588 / NCTC 13252 / RB50) (Alcaligenes bronchisepticus).